A 557-amino-acid chain; its full sequence is Small ribosomal subunit protein bS1 (557 aa).

S1 motif domains lie at 21–87 (GSIV…LSRE), 105–171 (SATV…VSRR), 192–260 (GMEV…LGLK), 277–347 (GTKL…LGLK), 364–434 (GDRV…LGVK), and 451–520 (GAIV…LSIR).

It belongs to the bacterial ribosomal protein bS1 family.

Its function is as follows. Binds mRNA; thus facilitating recognition of the initiation point. It is needed to translate mRNA with a short Shine-Dalgarno (SD) purine-rich sequence. This is Small ribosomal subunit protein bS1 (rpsA) from Dickeya dadantii (strain 3937) (Erwinia chrysanthemi (strain 3937)).